A 545-amino-acid polypeptide reads, in one-letter code: B3 domain-containing protein Os03g0620500 (545 aa).

A DNA-binding region (TF-B3 1) is located at residues 26 to 119 (MKCFHRQMSA…RRASGVQERN (94 aa)). A disordered region spans residues 111 to 188 (RASGVQERNA…SSSEHESSYD (78 aa)). The segment covering 173–186 (EEAKESSSSEHESS) has biased composition (basic and acidic residues). The segment at residues 231 to 331 (VTTMKHSNVN…RATVHLLRET (101 aa)) is a DNA-binding region (TF-B3 2). Residues 368-400 (RRGTMEPSTTNVKKEADNEQCNNGQGKRQEPLN) form a disordered region. The TF-B3 3 DNA-binding region spans 441–542 (YVSIMNKSNV…AMKVHIIRHN (102 aa)).

It localises to the nucleus. The chain is B3 domain-containing protein Os03g0620500 from Oryza sativa subsp. japonica (Rice).